Consider the following 218-residue polypeptide: Elongation factor Ts (218 aa).

Residues 82 to 85 (TDFV) form an involved in Mg(2+) ion dislocation from EF-Tu region.

The protein belongs to the EF-Ts family.

The protein localises to the cytoplasm. In terms of biological role, associates with the EF-Tu.GDP complex and induces the exchange of GDP to GTP. It remains bound to the aminoacyl-tRNA.EF-Tu.GTP complex up to the GTP hydrolysis stage on the ribosome. This Prochlorococcus marinus (strain MIT 9313) protein is Elongation factor Ts.